A 201-amino-acid polypeptide reads, in one-letter code: MPVYLGKRAPDFTANTTRGVISLSDYKNKWVLLFSHPADFTPICTTEFIEFSRRYNDFKELNVELIGLSVDSLQSHIEWLKDIYEKFGIEIQFPVIADINKEIAREYNLIDENAGNTVRGVFIIDPNQTVRWMIYYPAETGRNIDEILRSVKALQANWSRKIATPVNWRPGDKGILPPPSTLEDALQRIREGNKTWYIKTE.

In terms of domain architecture, Thioredoxin spans 3 to 156 (VYLGKRAPDF…ILRSVKALQA (154 aa)). The active-site Cysteine sulfenic acid (-SOH) intermediate is C44. R119 serves as a coordination point for substrate.

The protein belongs to the peroxiredoxin family. Prx6 subfamily. As to quaternary structure, homodecamer. Pentamer of dimers that assemble into a ring structure.

It is found in the cytoplasm. The catalysed reaction is a hydroperoxide + [thioredoxin]-dithiol = an alcohol + [thioredoxin]-disulfide + H2O. Functionally, thiol-specific peroxidase that catalyzes the reduction of hydrogen peroxide and organic hydroperoxides to water and alcohols, respectively. Plays a role in cell protection against oxidative stress by detoxifying peroxides. The chain is Peroxiredoxin 2 from Picrophilus torridus (strain ATCC 700027 / DSM 9790 / JCM 10055 / NBRC 100828 / KAW 2/3).